Here is a 436-residue protein sequence, read N- to C-terminus: Eukaryotic peptide chain release factor subunit 1-1 (436 aa).

It belongs to the eukaryotic release factor 1 family. In terms of assembly, heterodimer of two subunits, one of which binds GTP.

The protein localises to the cytoplasm. Directs the termination of nascent peptide synthesis (translation) in response to the termination codons UAA, UAG and UGA. Modulates plant growth and development. This Arabidopsis thaliana (Mouse-ear cress) protein is Eukaryotic peptide chain release factor subunit 1-1 (ERF1-1).